The primary structure comprises 554 residues: DNA ligase B (554 aa).

Lysine 122 functions as the N6-AMP-lysine intermediate in the catalytic mechanism.

It belongs to the NAD-dependent DNA ligase family. LigB subfamily.

The enzyme catalyses NAD(+) + (deoxyribonucleotide)n-3'-hydroxyl + 5'-phospho-(deoxyribonucleotide)m = (deoxyribonucleotide)n+m + AMP + beta-nicotinamide D-nucleotide.. Its function is as follows. Catalyzes the formation of phosphodiester linkages between 5'-phosphoryl and 3'-hydroxyl groups in double-stranded DNA using NAD as a coenzyme and as the energy source for the reaction. The polypeptide is DNA ligase B (Pseudomonas fluorescens (strain SBW25)).